Consider the following 581-residue polypeptide: Arginine--tRNA ligase (581 aa).

Residues 126 to 136 (PNLAKEMHVGH) carry the 'HIGH' region motif.

This sequence belongs to the class-I aminoacyl-tRNA synthetase family. As to quaternary structure, monomer.

Its subcellular location is the cytoplasm. The enzyme catalyses tRNA(Arg) + L-arginine + ATP = L-arginyl-tRNA(Arg) + AMP + diphosphate. This chain is Arginine--tRNA ligase, found in Shewanella halifaxensis (strain HAW-EB4).